The primary structure comprises 181 residues: Crossover junction endodeoxyribonuclease RuvC (181 aa).

Residues Asp7, Glu67, and Asp139 contribute to the active site. Residues Asp7, Glu67, and Asp139 each coordinate Mg(2+).

This sequence belongs to the RuvC family. As to quaternary structure, homodimer which binds Holliday junction (HJ) DNA. The HJ becomes 2-fold symmetrical on binding to RuvC with unstacked arms; it has a different conformation from HJ DNA in complex with RuvA. In the full resolvosome a probable DNA-RuvA(4)-RuvB(12)-RuvC(2) complex forms which resolves the HJ. Requires Mg(2+) as cofactor.

The protein resides in the cytoplasm. It catalyses the reaction Endonucleolytic cleavage at a junction such as a reciprocal single-stranded crossover between two homologous DNA duplexes (Holliday junction).. Its function is as follows. The RuvA-RuvB-RuvC complex processes Holliday junction (HJ) DNA during genetic recombination and DNA repair. Endonuclease that resolves HJ intermediates. Cleaves cruciform DNA by making single-stranded nicks across the HJ at symmetrical positions within the homologous arms, yielding a 5'-phosphate and a 3'-hydroxyl group; requires a central core of homology in the junction. The consensus cleavage sequence is 5'-(A/T)TT(C/G)-3'. Cleavage occurs on the 3'-side of the TT dinucleotide at the point of strand exchange. HJ branch migration catalyzed by RuvA-RuvB allows RuvC to scan DNA until it finds its consensus sequence, where it cleaves and resolves the cruciform DNA. The protein is Crossover junction endodeoxyribonuclease RuvC of Cupriavidus necator (strain ATCC 17699 / DSM 428 / KCTC 22496 / NCIMB 10442 / H16 / Stanier 337) (Ralstonia eutropha).